The chain runs to 168 residues: Protein DESIGUAL 2 (168 aa).

Residues Met-1–Ala-20 form the signal peptide. A run of 3 helical transmembrane segments spans residues Leu-56 to Leu-76, Ala-94 to Val-114, and Val-133 to Ile-153.

This sequence belongs to the DESIGUAL family. Mainly expressed in roots, inflorescences and developing leaves, and, at low levels, in mature leaves.

Its subcellular location is the endoplasmic reticulum membrane. Its function is as follows. Involved, partially redundantly with VCC/DEAL1 and DEAL3, to ensure bilateral symmetry development and early leaf margin patterning, probably via the regulation of auxin and CUC2 distribution. This Arabidopsis thaliana (Mouse-ear cress) protein is Protein DESIGUAL 2.